A 91-amino-acid chain; its full sequence is Small ribosomal subunit protein uS15 (91 aa).

Belongs to the universal ribosomal protein uS15 family. In terms of assembly, part of the 30S ribosomal subunit. Forms a bridge to the 50S subunit in the 70S ribosome, contacting the 23S rRNA.

Its function is as follows. One of the primary rRNA binding proteins, it binds directly to 16S rRNA where it helps nucleate assembly of the platform of the 30S subunit by binding and bridging several RNA helices of the 16S rRNA. In terms of biological role, forms an intersubunit bridge (bridge B4) with the 23S rRNA of the 50S subunit in the ribosome. This is Small ribosomal subunit protein uS15 from Rickettsia akari (strain Hartford).